Here is a 1321-residue protein sequence, read N- to C-terminus: Probable serine/threonine-protein kinase fnkE (1321 aa).

4 FNIP repeats span residues 108–149, 150–191, 192–233, and 255–296; these read YNQL…NLSS, YNQP…DLSS, YNKL…DLSS, and YNKL…DISS. Residues 295 to 595 enclose the Protein kinase 1 domain; it reads SSYNQLLTPG…YNYVIKDSIM (301 aa). ATP-binding positions include 301 to 309 and K325; that span reads LTPGTLSNN. D465 (proton acceptor) is an active-site residue. FNIP repeat units lie at residues 654-696 and 741-783; these read FNHP…FNKF and FNQP…LGSN. Residues 860–1128 enclose the Protein kinase 2 domain; sequence WEIISTLGSG…EGDSVFEKYL (269 aa). ATP is bound by residues 866–874 and K895; that span reads LGSGNFGKV. Catalysis depends on D990, which acts as the Proton acceptor. 2 FNIP repeats span residues 1160–1202 and 1224–1268; these read YNQM…LGNE and FNFT…LGSN.

Belongs to the protein kinase superfamily. STE Ser/Thr protein kinase family. Mg(2+) is required as a cofactor.

The enzyme catalyses L-seryl-[protein] + ATP = O-phospho-L-seryl-[protein] + ADP + H(+). It carries out the reaction L-threonyl-[protein] + ATP = O-phospho-L-threonyl-[protein] + ADP + H(+). This Dictyostelium discoideum (Social amoeba) protein is Probable serine/threonine-protein kinase fnkE.